Reading from the N-terminus, the 205-residue chain is MLTIALSKGRILEQTLPLLEKSGLIIAKEELNSRKLILDTNLTDVQVIIIRATDVPVFVQHGAADIGIAGKDVLLEHGANNLFEVLDLDITKCKLMVAAESKDKLKQNTLKIATKYVNSTKRYFQNKGQSCEIIKLYGAMELAPKVGLAHCIVDLVDTGNTLKANGLIAVERIEEISSRLVVNTASFKTKNAQIKSWIQNIEYNL.

The protein belongs to the ATP phosphoribosyltransferase family. Short subfamily. Heteromultimer composed of HisG and HisZ subunits.

It is found in the cytoplasm. The catalysed reaction is 1-(5-phospho-beta-D-ribosyl)-ATP + diphosphate = 5-phospho-alpha-D-ribose 1-diphosphate + ATP. It participates in amino-acid biosynthesis; L-histidine biosynthesis; L-histidine from 5-phospho-alpha-D-ribose 1-diphosphate: step 1/9. Its function is as follows. Catalyzes the condensation of ATP and 5-phosphoribose 1-diphosphate to form N'-(5'-phosphoribosyl)-ATP (PR-ATP). Has a crucial role in the pathway because the rate of histidine biosynthesis seems to be controlled primarily by regulation of HisG enzymatic activity. The protein is ATP phosphoribosyltransferase of Ruthia magnifica subsp. Calyptogena magnifica.